We begin with the raw amino-acid sequence, 178 residues long: Interleukin-10 (178 aa).

Residues 1–18 form the signal peptide; sequence MPNPVLLYCLVLLAGMGT. 2 disulfides stabilise this stretch: Cys30–Cys126 and Cys80–Cys132. N-linked (GlcNAc...) asparagine glycosylation is present at Asn134.

This sequence belongs to the IL-10 family. As to quaternary structure, homodimer. Interacts with IL10RA and IL10RB.

It is found in the secreted. Functionally, major immune regulatory cytokine that acts on many cells of the immune system where it has profound anti-inflammatory functions, limiting excessive tissue disruption caused by inflammation. Mechanistically, IL10 binds to its heterotetrameric receptor comprising IL10RA and IL10RB leading to JAK1 and STAT2-mediated phosphorylation of STAT3. In turn, STAT3 translocates to the nucleus where it drives expression of anti-inflammatory mediators. Targets antigen-presenting cells (APCs) such as macrophages and monocytes and inhibits their release of pro-inflammatory cytokines including granulocyte-macrophage colony-stimulating factor /GM-CSF, granulocyte colony-stimulating factor/G-CSF, IL-1 alpha, IL-1 beta, IL-6, IL-8 and TNF-alpha. Also interferes with antigen presentation by reducing the expression of MHC-class II and co-stimulatory molecules, thereby inhibiting their ability to induce T cell activation. In addition, controls the inflammatory response of macrophages by reprogramming essential metabolic pathways including mTOR signaling. The chain is Interleukin-10 (IL10) from Marmota monax (Woodchuck).